The sequence spans 139 residues: D-ribose pyranase (139 aa).

The active-site Proton donor is the His-20. Substrate contacts are provided by residues Asp-28, His-106, and 128-130; that span reads YAN.

Belongs to the RbsD / FucU family. RbsD subfamily. In terms of assembly, homodecamer.

The protein resides in the cytoplasm. The catalysed reaction is beta-D-ribopyranose = beta-D-ribofuranose. It functions in the pathway carbohydrate metabolism; D-ribose degradation; D-ribose 5-phosphate from beta-D-ribopyranose: step 1/2. Its function is as follows. Catalyzes the interconversion of beta-pyran and beta-furan forms of D-ribose. The chain is D-ribose pyranase from Escherichia coli O6:H1 (strain CFT073 / ATCC 700928 / UPEC).